The primary structure comprises 394 residues: Elongation factor Tu (394 aa).

Residues 10–204 (KPHVNVGTIG…YLDSYIPEPE (195 aa)) enclose the tr-type G domain. The interval 19–26 (GHVDHGKT) is G1. 19–26 (GHVDHGKT) is a binding site for GTP. T26 is a binding site for Mg(2+). A G2 region spans residues 60 to 64 (GITIN). The segment at 81–84 (DCPG) is G3. GTP contacts are provided by residues 81–85 (DCPGH) and 136–139 (NKCD). Positions 136–139 (NKCD) are G4. The segment at 174–176 (SAL) is G5.

It belongs to the TRAFAC class translation factor GTPase superfamily. Classic translation factor GTPase family. EF-Tu/EF-1A subfamily. In terms of assembly, monomer.

It is found in the cytoplasm. The enzyme catalyses GTP + H2O = GDP + phosphate + H(+). Its function is as follows. GTP hydrolase that promotes the GTP-dependent binding of aminoacyl-tRNA to the A-site of ribosomes during protein biosynthesis. The protein is Elongation factor Tu of Enterobacter sp. (strain 638).